We begin with the raw amino-acid sequence, 361 residues long: tRNA/tmRNA (uracil-C(5))-methyltransferase (361 aa).

Gln-183, Tyr-211, Asn-216, Glu-232, and Asp-294 together coordinate S-adenosyl-L-methionine. Cys-319 (nucleophile) is an active-site residue. The active-site Proton acceptor is the Glu-353.

This sequence belongs to the class I-like SAM-binding methyltransferase superfamily. RNA M5U methyltransferase family. TrmA subfamily.

The catalysed reaction is uridine(54) in tRNA + S-adenosyl-L-methionine = 5-methyluridine(54) in tRNA + S-adenosyl-L-homocysteine + H(+). It catalyses the reaction uridine(341) in tmRNA + S-adenosyl-L-methionine = 5-methyluridine(341) in tmRNA + S-adenosyl-L-homocysteine + H(+). Its function is as follows. Dual-specificity methyltransferase that catalyzes the formation of 5-methyluridine at position 54 (m5U54) in all tRNAs, and that of position 341 (m5U341) in tmRNA (transfer-mRNA). The polypeptide is tRNA/tmRNA (uracil-C(5))-methyltransferase (Acinetobacter baumannii (strain AYE)).